The primary structure comprises 482 residues: Adenylosuccinate lyase (482 aa).

Substrate contacts are provided by residues 14–15, 82–84, and 108–109; these read RY, RHD, and TS. Histidine 156 acts as the Proton donor/acceptor in catalysis. Lysine 196 participates in a covalent cross-link: Glycyl lysine isopeptide (Lys-Gly) (interchain with G-Cter in ubiquitin). A substrate-binding site is contributed by glutamine 238. Catalysis depends on serine 286, which acts as the Proton donor/acceptor. The substrate site is built by arginine 300, arginine 326, serine 331, and arginine 335.

This sequence belongs to the lyase 1 family. Adenylosuccinate lyase subfamily. Homotetramer. Residues from neighboring subunits contribute catalytic and substrate-binding residues to each active site.

The enzyme catalyses N(6)-(1,2-dicarboxyethyl)-AMP = fumarate + AMP. The catalysed reaction is (2S)-2-[5-amino-1-(5-phospho-beta-D-ribosyl)imidazole-4-carboxamido]succinate = 5-amino-1-(5-phospho-beta-D-ribosyl)imidazole-4-carboxamide + fumarate. The protein operates within purine metabolism; AMP biosynthesis via de novo pathway; AMP from IMP: step 2/2. Its pathway is purine metabolism; IMP biosynthesis via de novo pathway; 5-amino-1-(5-phospho-D-ribosyl)imidazole-4-carboxamide from 5-amino-1-(5-phospho-D-ribosyl)imidazole-4-carboxylate: step 2/2. The sequence is that of Adenylosuccinate lyase (ADE13) from Saccharomyces cerevisiae (strain ATCC 204508 / S288c) (Baker's yeast).